Consider the following 283-residue polypeptide: Protein/nucleic acid deglycase HchA (283 aa).

The Zn(2+) site is built by H86, E91, and H123. C185 acts as the Nucleophile in catalysis.

The protein belongs to the peptidase C56 family. HchA subfamily. In terms of assembly, homodimer.

Its subcellular location is the cytoplasm. It carries out the reaction N(omega)-(1-hydroxy-2-oxopropyl)-L-arginyl-[protein] + H2O = lactate + L-arginyl-[protein] + H(+). The enzyme catalyses N(6)-(1-hydroxy-2-oxopropyl)-L-lysyl-[protein] + H2O = lactate + L-lysyl-[protein] + H(+). The catalysed reaction is S-(1-hydroxy-2-oxopropyl)-L-cysteinyl-[protein] + H2O = lactate + L-cysteinyl-[protein] + H(+). It catalyses the reaction N(omega)-(1-hydroxy-2-oxoethyl)-L-arginyl-[protein] + H2O = L-arginyl-[protein] + glycolate + H(+). It carries out the reaction N(6)-(1-hydroxy-2-oxoethyl)-L-lysyl-[protein] + H2O = glycolate + L-lysyl-[protein] + H(+). The enzyme catalyses S-(1-hydroxy-2-oxoethyl)-L-cysteinyl-[protein] + H2O = glycolate + L-cysteinyl-[protein] + H(+). The catalysed reaction is N(2)-(1-hydroxy-2-oxopropyl)-dGTP + H2O = lactate + dGTP + H(+). It catalyses the reaction N(2)-(1-hydroxy-2-oxopropyl)-GTP + H2O = lactate + GTP + H(+). It carries out the reaction N(2)-(1-hydroxy-2-oxopropyl)-GDP + H2O = lactate + GDP + H(+). The enzyme catalyses N(2)-(1-hydroxy-2-oxopropyl)-GMP + H2O = lactate + GMP + H(+). The catalysed reaction is N(2)-(1-hydroxy-2-oxoethyl)-dGTP + H2O = dGTP + glycolate + H(+). It catalyses the reaction N(2)-(1-hydroxy-2-oxoethyl)-GTP + H2O = glycolate + GTP + H(+). It carries out the reaction N(2)-(1-hydroxy-2-oxoethyl)-GDP + H2O = glycolate + GDP + H(+). The enzyme catalyses N(2)-(1-hydroxy-2-oxoethyl)-GMP + H2O = glycolate + GMP + H(+). The catalysed reaction is an N(2)-(1-hydroxy-2-oxopropyl)-guanosine in RNA + H2O = a guanosine in RNA + lactate + H(+). It catalyses the reaction an N(2)-(1-hydroxy-2-oxopropyl)-2'-deoxyguanosine in DNA + H2O = a 2'-deoxyguanosine in DNA + lactate + H(+). It carries out the reaction an N(2)-(1-hydroxy-2-oxoethyl)-guanosine in RNA + H2O = a guanosine in RNA + glycolate + H(+). The enzyme catalyses an N(2)-(1-hydroxy-2-oxoethyl)-2'-deoxyguanosine in DNA + H2O = a 2'-deoxyguanosine in DNA + glycolate + H(+). Functionally, protein and nucleotide deglycase that catalyzes the deglycation of the Maillard adducts formed between amino groups of proteins or nucleotides and reactive carbonyl groups of glyoxals. Thus, functions as a protein deglycase that repairs methylglyoxal- and glyoxal-glycated proteins, and releases repaired proteins and lactate or glycolate, respectively. Deglycates cysteine, arginine and lysine residues in proteins, and thus reactivates these proteins by reversing glycation by glyoxals. Acts on early glycation intermediates (hemithioacetals and aminocarbinols), preventing the formation of Schiff bases and advanced glycation endproducts (AGE). Also functions as a nucleotide deglycase able to repair glycated guanine in the free nucleotide pool (GTP, GDP, GMP, dGTP) and in DNA and RNA. Is thus involved in a major nucleotide repair system named guanine glycation repair (GG repair), dedicated to reversing methylglyoxal and glyoxal damage via nucleotide sanitization and direct nucleic acid repair. Plays an important role in protecting cells from carbonyl stress. The polypeptide is Protein/nucleic acid deglycase HchA (Escherichia coli O8 (strain IAI1)).